Here is a 327-residue protein sequence, read N- to C-terminus: Fructose-1,6-bisphosphatase class 1 (327 aa).

Glu84, Asp103, Leu105, and Asp106 together coordinate Mg(2+). Substrate is bound by residues 106–109 (DGSS), Asn198, and Lys264. Glu270 contacts Mg(2+).

The protein belongs to the FBPase class 1 family. In terms of assembly, homotetramer. Mg(2+) serves as cofactor.

The protein localises to the cytoplasm. The catalysed reaction is beta-D-fructose 1,6-bisphosphate + H2O = beta-D-fructose 6-phosphate + phosphate. It participates in carbohydrate biosynthesis; gluconeogenesis. The polypeptide is Fructose-1,6-bisphosphatase class 1 (Psychrobacter cryohalolentis (strain ATCC BAA-1226 / DSM 17306 / VKM B-2378 / K5)).